The primary structure comprises 365 residues: MIIDTTTTKVQAINSFSRLEFLKEVYETIWMLFPILILVLGITIGVLVIVWLEREISASIQQRIGPEYAGPLGILQALADGTKLLFKENLLPSRGDTYLFSIGPSIAVISILLGYLIIPFGSRLVLADLSIGVFLWIAVSSIAPIGLLMSGYGSNNKYSFLGGLRAAAQSISYEIPLTLCVLSISLLSNSSSTVDIVEAQSKYGFWGWNLWRQPIGFIVFIISSLAECERLPFDLPEAEEELVAGYQTEYSGIKFGLFYVASYLNLLISSLFVTVLYLGGWNLSIPYIFISEFFEINKIDGVFGTTIGIFITLAKTFLFLFIPITTRWTLPRLRMDQLLNLGWKFLLPISLGNLLLTTSSQLFSL.

6 consecutive transmembrane segments (helical) span residues 32–52 (LFPILILVLGITIGVLVIVWL), 98–118 (YLFSIGPSIAVISILLGYLII), 129–149 (LSIGVFLWIAVSSIAPIGLLM), 257–279 (LFYVASYLNLLISSLFVTVLYLG), 302–322 (VFGTTIGIFITLAKTFLFLFI), and 338–358 (LLNLGWKFLLPISLGNLLLTT).

It belongs to the complex I subunit 1 family. In terms of assembly, NDH is composed of at least 16 different subunits, 5 of which are encoded in the nucleus.

It is found in the plastid. The protein resides in the chloroplast thylakoid membrane. It carries out the reaction a plastoquinone + NADH + (n+1) H(+)(in) = a plastoquinol + NAD(+) + n H(+)(out). The enzyme catalyses a plastoquinone + NADPH + (n+1) H(+)(in) = a plastoquinol + NADP(+) + n H(+)(out). Its function is as follows. NDH shuttles electrons from NAD(P)H:plastoquinone, via FMN and iron-sulfur (Fe-S) centers, to quinones in the photosynthetic chain and possibly in a chloroplast respiratory chain. The immediate electron acceptor for the enzyme in this species is believed to be plastoquinone. Couples the redox reaction to proton translocation, and thus conserves the redox energy in a proton gradient. This chain is NAD(P)H-quinone oxidoreductase subunit 1, chloroplastic, found in Spinacia oleracea (Spinach).